A 121-amino-acid polypeptide reads, in one-letter code: Large ribosomal subunit protein uL18 (121 aa).

This sequence belongs to the universal ribosomal protein uL18 family. As to quaternary structure, part of the 50S ribosomal subunit; part of the 5S rRNA/L5/L18/L25 subcomplex. Contacts the 5S and 23S rRNAs.

Functionally, this is one of the proteins that bind and probably mediate the attachment of the 5S RNA into the large ribosomal subunit, where it forms part of the central protuberance. The chain is Large ribosomal subunit protein uL18 from Buchnera aphidicola subsp. Baizongia pistaciae (strain Bp).